A 278-amino-acid chain; its full sequence is Probable endonuclease 4 (278 aa).

Zn(2+) contacts are provided by histidine 67, histidine 107, glutamate 141, aspartate 173, histidine 176, histidine 210, aspartate 223, histidine 225, and glutamate 255.

Belongs to the AP endonuclease 2 family. Zn(2+) is required as a cofactor.

It carries out the reaction Endonucleolytic cleavage to 5'-phosphooligonucleotide end-products.. In terms of biological role, endonuclease IV plays a role in DNA repair. It cleaves phosphodiester bonds at apurinic or apyrimidinic (AP) sites, generating a 3'-hydroxyl group and a 5'-terminal sugar phosphate. The chain is Probable endonuclease 4 from Natronomonas pharaonis (strain ATCC 35678 / DSM 2160 / CIP 103997 / JCM 8858 / NBRC 14720 / NCIMB 2260 / Gabara) (Halobacterium pharaonis).